We begin with the raw amino-acid sequence, 377 residues long: Guanine nucleotide-binding protein subunit alpha-13 (377 aa).

Residues Cys-14 and Cys-18 are each lipidated (S-palmitoyl cysteine). A G-alpha domain is found at 47 to 377 (RLVKILLLGA…HDNLKQLMLQ (331 aa)). The interval 50–63 (KILLLGAGESGKST) is G1 motif. GTP-binding positions include 58–63 (ESGKST), Ser-173, and 197–200 (LLAR). Ser-62 lines the Mg(2+) pocket. A G2 motif region spans residues 195–203 (DILLARRPT). Thr-203 provides a ligand contact to Mg(2+). Residue Thr-203 is modified to Phosphothreonine. The segment at 218–227 (FKMVDVGGQR) is G3 motif. Positions 287–294 (ILFLNKTD) are G4 motif. Residues 291–294 (NKTD) and Ala-349 each bind GTP. Residues 347-352 (TTAINT) are G5 motif.

Belongs to the G-alpha family. G(12) subfamily. In terms of assembly, g proteins are composed of 3 units; alpha, beta and gamma. The alpha chain contains the guanine nucleotide binding site. Interacts with UBXD5. Interacts with HAX1. Interacts (in GTP-bound form) with PPP5C (via TPR repeats); activates PPP5C phosphatase activity and translocates PPP5C to the cell membrane. Interacts with RGS22. Interacts (in GTP-bound form) with ARHGEF1. Interacts (in GTP-bound form) with ARHGEF11 (via RGS domain). Interacts (in GTP-bound form) with ARHGEF12 (via RGS domain). Interacts with CTNND1. Interacts with GAS2L2. Interacts with GPR35. Interacts with GPR174. Post-translationally, phosphorylation on Thr-203 destabilizes the heterotrimer of alpha, beta and gamma, and inhibits Rho activation. Expressed in brain and testis, as well as in kidney and sperm (at protein level).

The protein localises to the membrane. Its subcellular location is the melanosome. The protein resides in the cytoplasm. It is found in the nucleus. Its function is as follows. Guanine nucleotide-binding proteins (G proteins) are involved as modulators or transducers in various transmembrane signaling systems. Activates effector molecule RhoA by binding and activating RhoGEFs (ARHGEF1/p115RhoGEF, ARHGEF11/PDZ-RhoGEF and ARHGEF12/LARG). GNA13-dependent Rho signaling subsequently regulates transcription factor AP-1 (activating protein-1). Promotes tumor cell invasion and metastasis by activating Rho/ROCK signaling pathway. Inhibits CDH1-mediated cell adhesion in a process independent from Rho activation. In lymphoid follicles, transmits P2RY8- and S1PR2-dependent signals that lead to inhibition of germinal center (GC) B cell growth and migration outside the GC niche. This is Guanine nucleotide-binding protein subunit alpha-13 (Gna13) from Mus musculus (Mouse).